We begin with the raw amino-acid sequence, 303 residues long: Methionyl-tRNA formyltransferase (303 aa).

108–111 is a binding site for (6S)-5,6,7,8-tetrahydrofolate; sequence SDLP.

The protein belongs to the Fmt family.

It carries out the reaction L-methionyl-tRNA(fMet) + (6R)-10-formyltetrahydrofolate = N-formyl-L-methionyl-tRNA(fMet) + (6S)-5,6,7,8-tetrahydrofolate + H(+). Attaches a formyl group to the free amino group of methionyl-tRNA(fMet). The formyl group appears to play a dual role in the initiator identity of N-formylmethionyl-tRNA by promoting its recognition by IF2 and preventing the misappropriation of this tRNA by the elongation apparatus. The chain is Methionyl-tRNA formyltransferase from Rickettsia felis (strain ATCC VR-1525 / URRWXCal2) (Rickettsia azadi).